Consider the following 259-residue polypeptide: Phosphate import ATP-binding protein PstB 1 (259 aa).

In terms of domain architecture, ABC transporter spans 13–254 (IETKDVDLFY…PAEKETEDYI (242 aa)). 45–52 (GPSGCGKS) is an ATP binding site.

The protein belongs to the ABC transporter superfamily. Phosphate importer (TC 3.A.1.7) family. In terms of assembly, the complex is composed of two ATP-binding proteins (PstB), two transmembrane proteins (PstC and PstA) and a solute-binding protein (PstS).

It localises to the cell membrane. It carries out the reaction phosphate(out) + ATP + H2O = ADP + 2 phosphate(in) + H(+). Its function is as follows. Part of the ABC transporter complex PstSACB involved in phosphate import. Responsible for energy coupling to the transport system. This chain is Phosphate import ATP-binding protein PstB 1, found in Listeria innocua serovar 6a (strain ATCC BAA-680 / CLIP 11262).